Consider the following 498-residue polypeptide: ATP synthase subunit beta, chloroplastic (498 aa).

A Phosphothreonine modification is found at T6. S13 is modified (phosphoserine). 172–179 is an ATP binding site; that stretch reads GGAGVGKT.

This sequence belongs to the ATPase alpha/beta chains family. In terms of assembly, F-type ATPases have 2 components, CF(1) - the catalytic core - and CF(0) - the membrane proton channel. CF(1) has five subunits: alpha(3), beta(3), gamma(1), delta(1), epsilon(1). CF(0) has four main subunits: a(1), b(1), b'(1) and c(9-12).

It localises to the plastid. It is found in the chloroplast thylakoid membrane. The enzyme catalyses ATP + H2O + 4 H(+)(in) = ADP + phosphate + 5 H(+)(out). In terms of biological role, produces ATP from ADP in the presence of a proton gradient across the membrane. The catalytic sites are hosted primarily by the beta subunits. This Raphanus sativus (Radish) protein is ATP synthase subunit beta, chloroplastic.